Reading from the N-terminus, the 214-residue chain is Phosphoenolpyruvate guanylyltransferase 2 (214 aa).

Positions 135, 150, and 153 each coordinate phosphoenolpyruvate.

Belongs to the CofC family.

The enzyme catalyses phosphoenolpyruvate + GTP + H(+) = enolpyruvoyl-2-diphospho-5'-guanosine + diphosphate. Its pathway is cofactor biosynthesis; coenzyme F420 biosynthesis. Its function is as follows. Guanylyltransferase that catalyzes the activation of phosphoenolpyruvate (PEP) as enolpyruvoyl-2-diphospho-5'-guanosine, via the condensation of PEP with GTP. It is involved in the biosynthesis of coenzyme F420, a hydride carrier cofactor. The chain is Phosphoenolpyruvate guanylyltransferase 2 from Rhodococcus jostii (strain RHA1).